The sequence spans 1333 residues: Partitioning defective 3 homolog (1333 aa).

Ser25 is subject to Phosphoserine. Thr91 carries the phosphothreonine modification. The segment at 143-262 (SSDPALTGLS…VGHADTGLEN (120 aa)) is disordered. Composition is skewed to polar residues over residues 150–163 (GLST…FSSE) and 171–187 (TRWS…TAGS). A phosphoserine mark is found at Ser156 and Ser174. Positions 190-203 (TCDRKKDENYRSLP) are enriched in basic and acidic residues. Residues 207–224 (SSWSNQFQRDNARSSLSA) show a composition bias toward polar residues. Positions 271–359 (MVKLVQVPND…ARVIWFHVVP (89 aa)) constitute a PDZ 1 domain. 2 disordered regions span residues 369 to 388 (LSQR…DSHC) and 397 to 441 (NAPQ…APPS). Position 383 is a phosphoserine (Ser383). 2 consecutive PDZ domains span residues 461–546 (NIQL…LVFR) and 590–677 (EVPL…GMIQ). A Phosphotyrosine modification is found at Tyr489. Phosphoserine is present on residues Ser692, Ser695, Ser715, Ser728, Ser806, and Ser824. Interaction with PRKCI and PRKCZ stretches follow at residues 712–932 (RRIS…YDKP) and 712–936 (RRIS…MVDD). Lys831 carries the N6-acetyllysine modification. The residue at position 834 (Ser834) is a Phosphoserine. Position 848 is an N6-acetyllysine (Lys848). Residues Ser849 and Ser869 each carry the phosphoserine modification. Disordered stretches follow at residues 861 to 884 (TVDD…KKSS), 928 to 1011 (SYDK…AKKG), 1024 to 1071 (KHRK…ERQA), 1110 to 1267 (PQSP…LGGH), and 1283 to 1333 (QEQR…PFYS). At Lys881 the chain carries N6-acetyllysine. The interval 931–1333 (KPMVDDDDEG…TPEKGRPFYS (403 aa)) is interaction with FRMD4A. Residues 935–949 (DDDDEGMETLEEDTE) are compositionally biased toward acidic residues. Phosphoserine; by AURKA is present on Ser958. Ser967 and Ser969 each carry phosphoserine. 2 stretches are compositionally biased toward basic and acidic residues: residues 977-1005 (DPEK…EKDK) and 1026-1039 (RKDD…RIKI). Ser1042 is subject to Phosphoserine. Residues 1046–1071 (EEDRVRMKEEQERIQAKTREFRERQA) show a composition bias toward basic and acidic residues. A coiled-coil region spans residues 1046-1078 (EEDRVRMKEEQERIQAKTREFRERQARERDYAE). Residues 1134–1143 (PGDSNRSTPS) show a composition bias toward polar residues. Positions 1144–1171 (NHDRIQRLRQEFQQAKQDEDVEDRRRTY) are enriched in basic and acidic residues. 3 coiled-coil regions span residues 1145 to 1168 (HDRI…EDRR), 1195 to 1218 (VQVQ…YSSL), and 1274 to 1295 (MLET…LKKQ). A compositionally biased stretch (low complexity) spans 1176-1199 (SWSSSRPASQSGRHSVSVEVQVQR). Positions 1215-1236 (YSSLPRQSRKNASSISQDSWEQ) are enriched in polar residues. Basic and acidic residues predominate over residues 1283–1292 (QEQRRKEQQL). A compositionally biased stretch (polar residues) spans 1314–1323 (SQVARLNRLQ). Basic and acidic residues predominate over residues 1324–1333 (TPEKGRPFYS). At Lys1327 the chain carries N6-acetyllysine.

This sequence belongs to the PAR3 family. Interacts with PRCKI and CDH5. Interacts (via PDZ 3 domain) with PTEN (via C-terminus). Component of a complex whose core is composed of ARHGAP17, AMOT, PALS1, PATJ and PARD3/PAR3. Interacts with LIMK2, AURKA and AURKB. Component of the Par polarity complex, composed of at least phosphorylated PRKCZ, PARD3 and TIAM1. Interacts with ECT2 and FBF1. Interacts (via PDZ 1 domain) with F11R/JAM1, PARD6A and PARD6B. Part of a complex with PARD6A or PARD6B, PRKCI or PRKCZ and CDC42 or RAC1. Directly interacts with TIAM1 and TIAM2. Interacts with SIRT2. Interacts (via coiled-coil domain) with FRMD4A. Found in a complex with PARD3, CYTH1 and FRMD4A. Interacts with SAPCD2. Interacts with PRKCA. In terms of assembly, interacts with PRKCZ. Acetylated. Deacetylated by SIRT2, thereby inhibiting Schwann cell peripheral myelination. In terms of processing, phosphorylation at Ser-824 by PRKCZ and PRKCI occurs at the most apical tip of epithelial cell-cell contacts during the initial phase of tight junction formation and may promote dissociation of the complex with PARD6. EGF-induced Tyr-1123 phosphorylation mediates dissociation from LIMK2. Phosphorylation by AURKA at Ser-958 is required for the normal establishment of neuronal polarity. Isoform 4 and isoform 5 are phosphorylated during oocyte maturation. All isoforms are expressed in heart, while expression in brain is mainly limited to isoform 1, and to isoform 3 to a weaker level.

Its subcellular location is the cytoplasm. It localises to the endomembrane system. It is found in the cell junction. The protein resides in the tight junction. The protein localises to the adherens junction. Its subcellular location is the cell cortex. It localises to the cytoskeleton. It is found in the cell membrane. In terms of biological role, adapter protein involved in asymmetrical cell division and cell polarization processes. Seems to play a central role in the formation of epithelial tight junctions. Targets the phosphatase PTEN to cell junctions. Association with PARD6B may prevent the interaction of PARD3 with F11R/JAM1, thereby preventing tight junction assembly. The PARD6-PARD3 complex links GTP-bound Rho small GTPases to atypical protein kinase C proteins. Required for establishment of neuronal polarity and normal axon formation in cultured hippocampal neurons. Involved in Schwann cell peripheral myelination. This Mus musculus (Mouse) protein is Partitioning defective 3 homolog (Pard3).